Here is a 198-residue protein sequence, read N- to C-terminus: uncharacterized protein (198 aa).

The PA14 domain occupies 1–110; it reads MTGYFLPPQT…GTTVSDDFEG (110 aa).

This sequence belongs to the flocculin family.

This is an uncharacterized protein from Saccharomyces cerevisiae (strain ATCC 204508 / S288c) (Baker's yeast).